Here is a 421-residue protein sequence, read N- to C-terminus: Serine--tRNA ligase (421 aa).

Residue 229–231 (TSE) participates in L-serine binding. ATP-binding positions include 260–262 (RKE) and Val276. Glu283 is a binding site for L-serine. An ATP-binding site is contributed by 347–350 (EIVS). Position 383 (Thr383) interacts with L-serine.

This sequence belongs to the class-II aminoacyl-tRNA synthetase family. Type-1 seryl-tRNA synthetase subfamily. As to quaternary structure, homodimer. The tRNA molecule binds across the dimer.

The protein resides in the cytoplasm. It catalyses the reaction tRNA(Ser) + L-serine + ATP = L-seryl-tRNA(Ser) + AMP + diphosphate + H(+). The catalysed reaction is tRNA(Sec) + L-serine + ATP = L-seryl-tRNA(Sec) + AMP + diphosphate + H(+). Its pathway is aminoacyl-tRNA biosynthesis; selenocysteinyl-tRNA(Sec) biosynthesis; L-seryl-tRNA(Sec) from L-serine and tRNA(Sec): step 1/1. Catalyzes the attachment of serine to tRNA(Ser). Is also able to aminoacylate tRNA(Sec) with serine, to form the misacylated tRNA L-seryl-tRNA(Sec), which will be further converted into selenocysteinyl-tRNA(Sec). The protein is Serine--tRNA ligase of Nitrosopumilus maritimus (strain SCM1).